Consider the following 334-residue polypeptide: MSGFYHKHFLKLLDFTPAELNSLLQLAAKLKADKKSGKEEAKLTGKNIALIFEKDSTRTRCSFEVAAYDQGARVTYLGPSGSQIGHKESIKDTARVLGRMYDGIQYRGYGQEIVETLAEYAGVPVWNGLTNEFHPTQLLADLLTMQEHLPGKTFNEMTLVYAGDARNNMGNSMLEAAALTGLDLRLVAPKACWPEAALVTECRALAQQNGGDITLTEDVAKGVEGADFIYTDVWVSMGEAKEKWAERIALLRDYQVNSKMMQLTGNPEVKFLHCLPAFHDDQTTLGKKMAEEFGLHGGMEVTDEVFESAASIVFDQAENRMHTIKAVMVATLSK.

Carbamoyl phosphate contacts are provided by residues 56–59, Gln83, Arg107, and 134–137; these read STRT and HPTQ. L-ornithine contacts are provided by residues Asn168, Asp232, and 236–237; that span reads SM. Carbamoyl phosphate contacts are provided by residues 274 to 275 and Arg320; that span reads CL.

The protein belongs to the aspartate/ornithine carbamoyltransferase superfamily. OTCase family.

It is found in the cytoplasm. The enzyme catalyses carbamoyl phosphate + L-ornithine = L-citrulline + phosphate + H(+). It functions in the pathway amino-acid biosynthesis; L-arginine biosynthesis; L-arginine from L-ornithine and carbamoyl phosphate: step 1/3. Functionally, reversibly catalyzes the transfer of the carbamoyl group from carbamoyl phosphate (CP) to the N(epsilon) atom of ornithine (ORN) to produce L-citrulline. The sequence is that of Ornithine carbamoyltransferase from Escherichia coli O45:K1 (strain S88 / ExPEC).